The following is a 456-amino-acid chain: Methylenetetrahydrofolate--tRNA-(uracil-5-)-methyltransferase TrmFO (456 aa).

11–16 (GAGLAG) serves as a coordination point for FAD.

The protein belongs to the MnmG family. TrmFO subfamily. Requires FAD as cofactor.

The protein resides in the cytoplasm. The enzyme catalyses uridine(54) in tRNA + (6R)-5,10-methylene-5,6,7,8-tetrahydrofolate + NADH + H(+) = 5-methyluridine(54) in tRNA + (6S)-5,6,7,8-tetrahydrofolate + NAD(+). It catalyses the reaction uridine(54) in tRNA + (6R)-5,10-methylene-5,6,7,8-tetrahydrofolate + NADPH + H(+) = 5-methyluridine(54) in tRNA + (6S)-5,6,7,8-tetrahydrofolate + NADP(+). Catalyzes the folate-dependent formation of 5-methyl-uridine at position 54 (M-5-U54) in all tRNAs. The sequence is that of Methylenetetrahydrofolate--tRNA-(uracil-5-)-methyltransferase TrmFO from Synechococcus sp. (strain CC9605).